Reading from the N-terminus, the 418-residue chain is MDIGDFVKLELENTTYSGTVMPSLNEDTVVIKMKSGYNVGIDKKKIKNIEILESGDKPKYGLPPLNLEKNPKLKNISILSTGGTVASRVDYKTGAVHPAFTADDLIRAVPELMDVANIKGKVILNILSENMLPKYWVMTADAIKEEIENGAEGIVIAHGTDTMHYTASALSFMVNSEVPIILVGAQRSSDRPSSDAALNIIAAVKAATEPIKGVYVLMHGETGDTVCHLHEGTKVRKLHSSRRDAFKSVNETPIAEVNPFTKKVTYLREVKSQDRSKIKEVVLNTNLEEKVALIKVYPGIDSEILKFYVDNGYKGIILEGTGLGHTPETFFEGIDYANENNVLVAMTTQTINGRVNMNVYSNGRELQAKGVIPCEDMLSEVAFVKLMHLLGNYEFKEAKELMSKNIAGEINESINLEC.

The Asparaginase/glutaminase domain occupies 74-405 (KNISILSTGG…KEAKELMSKN (332 aa)). Residues Thr-84, Thr-160, Asp-161, and Lys-237 contribute to the active site.

The protein belongs to the asparaginase 1 family. GatD subfamily. Heterodimer of GatD and GatE.

It catalyses the reaction L-glutamyl-tRNA(Gln) + L-glutamine + ATP + H2O = L-glutaminyl-tRNA(Gln) + L-glutamate + ADP + phosphate + H(+). Allows the formation of correctly charged Gln-tRNA(Gln) through the transamidation of misacylated Glu-tRNA(Gln) in organisms which lack glutaminyl-tRNA synthetase. The reaction takes place in the presence of glutamine and ATP through an activated gamma-phospho-Glu-tRNA(Gln). The GatDE system is specific for glutamate and does not act on aspartate. This Methanococcus maripaludis (strain DSM 14266 / JCM 13030 / NBRC 101832 / S2 / LL) protein is Glutamyl-tRNA(Gln) amidotransferase subunit D.